The following is a 251-amino-acid chain: MWIGVISLFPEMFRAITDYGVTGRAVKNGLLNVQYWSPRDFTYDRHRTVDDRPYGGGPGMLMMVQPLRDAIHAAKAAAGEGARVIYLSPQGRKLDQQGVRQLATNQKMILVCGRYEGIDERVIKTEIDEEWSIGDYVLSGGELPAMTLIDSVARFIPGVLGHQASAEEDSFADGLLDCPHFTRPEILEGMEVPAVLLSGNHAEIRRWRLKQSLGRTWLRRPELLKSLALTDEQTRLLAEFQREYQSEQQEY.

Residues G113 and 133-138 each bind S-adenosyl-L-methionine; that span reads IGDYVL.

Belongs to the RNA methyltransferase TrmD family. As to quaternary structure, homodimer.

Its subcellular location is the cytoplasm. It catalyses the reaction guanosine(37) in tRNA + S-adenosyl-L-methionine = N(1)-methylguanosine(37) in tRNA + S-adenosyl-L-homocysteine + H(+). In terms of biological role, specifically methylates guanosine-37 in various tRNAs. This is tRNA (guanine-N(1)-)-methyltransferase from Pectobacterium carotovorum subsp. carotovorum (strain PC1).